The following is a 476-amino-acid chain: MKVSLPAFEKARVLVVGDVMLDRYWVGPTGRISPEAPVPVVKINQVEDRPGGAANVALNIATLGGQVQLAGLVGQDDTAHALTLGVQTLGVEPQWLTIADKPTITKLRVLSRNQQLIRLDFEEAFDKADSVRLLKQSEALLDSVDVVVLSDYAKGAIDQPRDFIALARAKGVMVLVDPKGSDFGRYQGASLITPNMSEFEAVVGTVTSEADLLEKARGLLKQHHFDAILVTRSEKGMTLVTANAPELHIPTVAREVYDVTGAGDTVISALATSLAAGADLPQACAIANTAAGVVVGKLGTSTVSRIELIEALALHHGESGFGVVSEDQLAYALEQAKLRGERVVMTNGCFDILHAGHVSYLKQAKALGDRLIVAVNDDASVKRLKGDGRPVNQVDRRMAVLAGLASVDWVVPFSEDTPQRIITRLLPNLLVKGGDYKLEDIAGGAEVIAAGGQVQVLGFEDGISTTAIIQNIMANQ.

The tract at residues 1–319 (MKVSLPAFEK…EALALHHGES (319 aa)) is ribokinase. Residue 195-198 (NMSE) coordinates ATP. Aspartate 264 is a catalytic residue. The segment at 345 to 476 (MTNGCFDILH…AIIQNIMANQ (132 aa)) is cytidylyltransferase.

It in the N-terminal section; belongs to the carbohydrate kinase PfkB family. The protein in the C-terminal section; belongs to the cytidylyltransferase family. As to quaternary structure, homodimer.

It carries out the reaction D-glycero-beta-D-manno-heptose 7-phosphate + ATP = D-glycero-beta-D-manno-heptose 1,7-bisphosphate + ADP + H(+). It catalyses the reaction D-glycero-beta-D-manno-heptose 1-phosphate + ATP + H(+) = ADP-D-glycero-beta-D-manno-heptose + diphosphate. It functions in the pathway nucleotide-sugar biosynthesis; ADP-L-glycero-beta-D-manno-heptose biosynthesis; ADP-L-glycero-beta-D-manno-heptose from D-glycero-beta-D-manno-heptose 7-phosphate: step 1/4. Its pathway is nucleotide-sugar biosynthesis; ADP-L-glycero-beta-D-manno-heptose biosynthesis; ADP-L-glycero-beta-D-manno-heptose from D-glycero-beta-D-manno-heptose 7-phosphate: step 3/4. Catalyzes the phosphorylation of D-glycero-D-manno-heptose 7-phosphate at the C-1 position to selectively form D-glycero-beta-D-manno-heptose-1,7-bisphosphate. Its function is as follows. Catalyzes the ADP transfer from ATP to D-glycero-beta-D-manno-heptose 1-phosphate, yielding ADP-D-glycero-beta-D-manno-heptose. This chain is Bifunctional protein HldE, found in Shewanella baltica (strain OS195).